Here is a 426-residue protein sequence, read N- to C-terminus: D-tagatose-1,6-bisphosphate aldolase subunit KbaZ (426 aa).

This sequence belongs to the GatZ/KbaZ family. KbaZ subfamily. As to quaternary structure, forms a complex with KbaY.

Its pathway is carbohydrate metabolism; D-tagatose 6-phosphate degradation; D-glyceraldehyde 3-phosphate and glycerone phosphate from D-tagatose 6-phosphate: step 2/2. In terms of biological role, component of the tagatose-1,6-bisphosphate aldolase KbaYZ that is required for full activity and stability of the Y subunit. Could have a chaperone-like function for the proper and stable folding of KbaY. When expressed alone, KbaZ does not show any aldolase activity. This chain is D-tagatose-1,6-bisphosphate aldolase subunit KbaZ, found in Escherichia coli O1:K1 / APEC.